Here is a 943-residue protein sequence, read N- to C-terminus: U3 small nucleolar RNA-associated protein 12 (943 aa).

WD repeat units follow at residues 77–107 (AKPA…KVWD), 119–149 (GHKA…IVWD), 161–190 (SHKD…KLWD), 202–230 (AHTG…KIWK), 389–418 (GQRT…KIWN), 428–458 (FECG…QLFD), 471–501 (AHDA…KFWD), 571–601 (GHKL…KIWG), 613–643 (AHQD…KYWD), and 655–685 (AHQS…RIWE). Residues 715–739 (EGNGDDAFKADASGEGVEDEASGVH) form a disordered region.

This sequence belongs to the WD repeat WDR3/UTP12 family. As to quaternary structure, interacts with snoRNA U3. Interacts with MPP10. Component of the ribosomal small subunit (SSU) processome composed of at least 40 protein subunits and snoRNA U3.

It is found in the nucleus. It localises to the nucleolus. Functionally, involved in nucleolar processing of pre-18S ribosomal RNA. The sequence is that of U3 small nucleolar RNA-associated protein 12 (DIP2) from Saccharomyces cerevisiae (strain ATCC 204508 / S288c) (Baker's yeast).